The primary structure comprises 77 residues: Small, acid-soluble spore protein Tlp (77 aa).

Belongs to the Tlp family.

Its subcellular location is the spore core. The chain is Small, acid-soluble spore protein Tlp from Geobacillus sp. (strain WCH70).